A 273-amino-acid chain; its full sequence is Gamma-glutamyl cyclotransferase gliK (273 aa).

Residues 227–243 (WLGWIILTLYGLMWSYH) form a helical membrane-spanning segment.

It belongs to the class-I pyridoxal-phosphate-dependent aminotransferase family.

The protein resides in the membrane. The enzyme catalyses an alpha-(gamma-L-glutamyl)-L-amino acid = 5-oxo-L-proline + an L-alpha-amino acid. Its pathway is mycotoxin biosynthesis. In terms of biological role, gamma-glutamyl cyclotransferase-like protein; part of the gene cluster that mediates the biosynthesis of gliotoxin, a member of the epipolythiodioxopiperazine (ETP) class of toxins characterized by a disulfide bridged cyclic dipeptide. The first step in gliotoxin biosynthesis is the condensation of serine and phenylalanine to form the cyclo-L-phenylalanyl-L-serine diketopiperazine (DKP) by the NRPS gliP. GliP is also able to produce the DKP cyclo-L-tryptophanyl-L-serine, suggesting that the substrate specificity of the first adenylation (A) domain in gliP is sufficiently relaxed to accommodate both L-Phe and L-Trp. The cytochrome P450 monooxygenase gliC has been shown to catalyze the subsequent hydroxylation of the alpha-carbon of L-Phe in cyclo-L-phenylalanyl-L-serine whereas the second cytochrome P450 enzyme, gliF, is presumably involved in the modification of the DKP side chain. The glutathione S-transferase (GST) gliG then forms a bis-glutathionylated biosynthetic intermediate which is responsible for the sulfurization of gliotoxin. This bis-glutathionylated intermediate is subsequently processed by the gamma-glutamyl cyclotransferase gliK to remove both gamma-glutamyl moieties. Subsequent processing via gliI yields a biosynthetic intermediate, which is N-methylated via the N-methyltransferase gliN, before the gliotoxin oxidoreductase gliT-mediated disulfide bridge closure. GliN-mediated amide methylation confers stability to ETP, damping the spontaneous formation of tri- and tetrasulfides. Intracellular dithiol gliotoxin oxidized by gliT is subsequently effluxed by gliA. Gliotoxin contributes to pathogenesis during invasive aspergillosis. In macrophages and neutrophils, gliotoxin showed inhibition of various different cell functions including cytokine production, antigen presentation, phagocytosis, and production of reactive oxygen species. This chain is Gamma-glutamyl cyclotransferase gliK, found in Aspergillus fumigatus (strain ATCC MYA-4609 / CBS 101355 / FGSC A1100 / Af293) (Neosartorya fumigata).